A 190-amino-acid chain; its full sequence is ATP synthase subunit delta (190 aa).

This sequence belongs to the ATPase delta chain family. As to quaternary structure, F-type ATPases have 2 components, F(1) - the catalytic core - and F(0) - the membrane proton channel. F(1) has five subunits: alpha(3), beta(3), gamma(1), delta(1), epsilon(1). F(0) has three main subunits: a(1), b(2) and c(10-14). The alpha and beta chains form an alternating ring which encloses part of the gamma chain. F(1) is attached to F(0) by a central stalk formed by the gamma and epsilon chains, while a peripheral stalk is formed by the delta and b chains.

It is found in the cell inner membrane. In terms of biological role, f(1)F(0) ATP synthase produces ATP from ADP in the presence of a proton or sodium gradient. F-type ATPases consist of two structural domains, F(1) containing the extramembraneous catalytic core and F(0) containing the membrane proton channel, linked together by a central stalk and a peripheral stalk. During catalysis, ATP synthesis in the catalytic domain of F(1) is coupled via a rotary mechanism of the central stalk subunits to proton translocation. Its function is as follows. This protein is part of the stalk that links CF(0) to CF(1). It either transmits conformational changes from CF(0) to CF(1) or is implicated in proton conduction. The sequence is that of ATP synthase subunit delta from Salinibacter ruber (strain DSM 13855 / M31).